The primary structure comprises 149 residues: Lymphocyte antigen 6 complex locus protein G5c (149 aa).

Residues 1-41 (MLFMAGPAASWSLRPLGLHGVPQALCAVLLTVLVMKTLVLG) form the signal peptide. The 91-residue stretch at 59–149 (LNCYRCLLET…NPDNRKNSMH (91 aa)) folds into the UPAR/Ly6 domain. 5 disulfides stabilise this stretch: Cys61–Cys88, Cys64–Cys73, Cys80–Cys106, Cys115–Cys132, and Cys133–Cys138. Asn95 carries N-linked (GlcNAc...) asparagine glycosylation.

In terms of assembly, forms oligomers. N-glycosylated. As to expression, detected in adult brain.

The protein resides in the secreted. In terms of biological role, may have a role in hematopoietic cell differentiation. The protein is Lymphocyte antigen 6 complex locus protein G5c (Ly6g5c) of Mus musculus (Mouse).